An 841-amino-acid polypeptide reads, in one-letter code: MFALVLAVVILPLWTTANKSYVTPTPATRSIGHMSALLREYSDRNMSLKLEAFYPTGFDEELIKSLHWGNDRKHVFLVIVKVNPTTHEGDVGLVIFPKYLLSPYHFKAEHRAPFPAGRFGFLSHPVTPDVSFFDSSFAPYLTTQHLVAFTTFPPNPLVWHLERAETAATAERPFGVSLLPARPTVPKNTILEHKAHFATWDALARHTFFSAEAIITNSTLRIHVPLFGSVWPIRYWATGSVLLTSDSGRVEVNIGVGFMSSLISLSSGLPIELIVVPHTVKLNAVTSDTTWFQLNPPGPDPGPSYRVYLLGRGLDMNFSKHATVDICAYPEESLDYRYHLSMAHTEALRMTTKADQHDINEESYYHIAARIATSIFALSEMGRTTEYFLLDEIVDVQYQLKFLNYILMRIGAGAHPNTISGTSDLIFADPSQLHDELSLLFGQVKPANVDYFISYDEARDQLKTAYALSRGQDHVNALSLARRVIMSIYKGLLVKQNLNATERQALFFASMILLNFREGLENSSRVLDGRTTLLLMTSMCTAAHATQAALNIQEGLAYLNPSKHMFTIPNVYSPCMGSLRTDLTEEIHVMNLLSAIPTRPGLNEVLHTQLDESEIFDAAFKTMMIFTTWTAKDLHILHTHVPEVFTCQDAAARNGEYVLILPAVQGHSYVITRNKPQRGLVYSLADVDVYNPISVVYLSKDTCVSEHGVIETVALPHPDNLKECLYCGSVFLRYLTTGAIMDIIIIDSKDTERQLAAMGNSTIPPFNPDMHGDDSKAVLLFPNGTVVTLLGFERRQAIRMSGQYLGASLGGAFLAVVGFGIIGWMLCGNSRLREYNKIPLT.

The signal sequence occupies residues 1–17 (MFALVLAVVILPLWTTA). Residues Asn-18, Asn-45, and Asn-217 are each glycosylated (N-linked (GlcNAc...) asparagine; by host). Topologically, residues 18–802 (NKSYVTPTPA…ERRQAIRMSG (785 aa)) are virion surface. The interval 246-309 (DSGRVEVNIG…DPGPSYRVYL (64 aa)) is interaction with gL. 5 N-linked (GlcNAc...) asparagine; by host glycosylation sites follow: Asn-317, Asn-499, Asn-522, Asn-760, and Asn-783. The helical transmembrane segment at 803–823 (QYLGASLGGAFLAVVGFGIIG) threads the bilayer. Over 824–841 (WMLCGNSRLREYNKIPLT) the chain is Intravirion.

The protein belongs to the herpesviridae glycoprotein H family. As to quaternary structure, interacts with glycoprotein L (gL); this interaction is necessary for the correct processing and cell surface expression of gH. The heterodimer gH/gL seems to interact with gB trimers during fusion. N-glycosylated, O-glycosylated, and sialylated.

It is found in the virion membrane. It localises to the host cell membrane. Its subcellular location is the host endosome membrane. The heterodimer glycoprotein H-glycoprotein L is required for the fusion of viral and plasma membranes leading to virus entry into the host cell. Following initial binding to host receptor, membrane fusion is mediated by the fusion machinery composed of gB and the heterodimer gH/gL. May also be involved in the fusion between the virion envelope and the outer nuclear membrane during virion morphogenesis. The protein is Envelope glycoprotein H of Varicella-zoster virus (strain Oka vaccine) (HHV-3).